The chain runs to 670 residues: ATP synthase subunit alpha 2 (670 aa).

180–187 (GDRATGKT) contributes to the ATP binding site. The tract at residues 527–670 (AEDAAGDIGG…DAEAEARHKR (144 aa)) is disordered. Positions 543-588 (ARGDADRDADHGANREVSREVSPEASREVSREVSREVSHEADRDAA) are enriched in basic and acidic residues. Residues 589–599 (ADAARVAGRAP) show a composition bias toward low complexity. The segment covering 621–639 (ADGDRASASRPRPDARGDA) has biased composition (basic and acidic residues). A compositionally biased stretch (low complexity) spans 640–661 (ARTAPSPQGGAEVNVNAAANVD).

Belongs to the ATPase alpha/beta chains family. As to quaternary structure, F-type ATPases have 2 components, CF(1) - the catalytic core - and CF(0) - the membrane proton channel. CF(1) has five subunits: alpha(3), beta(3), gamma(1), delta(1), epsilon(1). CF(0) has three main subunits: a(1), b(2) and c(9-12). The alpha and beta chains form an alternating ring which encloses part of the gamma chain. CF(1) is attached to CF(0) by a central stalk formed by the gamma and epsilon chains, while a peripheral stalk is formed by the delta and b chains.

The protein resides in the cell inner membrane. The catalysed reaction is ATP + H2O + 4 H(+)(in) = ADP + phosphate + 5 H(+)(out). Its function is as follows. Produces ATP from ADP in the presence of a proton gradient across the membrane. The alpha chain is a regulatory subunit. The chain is ATP synthase subunit alpha 2 from Burkholderia pseudomallei (strain 668).